The chain runs to 42 residues: Large ribosomal subunit protein eL32 (42 aa).

This sequence belongs to the eukaryotic ribosomal protein eL32 family.

The chain is Large ribosomal subunit protein eL32 (RPL32) from Zea mays (Maize).